The primary structure comprises 816 residues: Bifunctional aspartokinase/homoserine dehydrogenase (816 aa).

An aspartokinase region spans residues 1–250 (MKLLKFGGTS…VPNARLLKSI (250 aa)). Residues 251 to 471 (SYQEAMELSY…FNKKTIHMFL (221 aa)) form an interface region. The ACT domain maps to 402-479 (IVGSNIYKKH…FLIGIGGIGS (78 aa)). The homoserine dehydrogenase stretch occupies residues 472–816 (IGIGGIGSTL…VFSDLLRTLS (345 aa)). NAD(+)-binding residues include Gly476, Ile477, and Ala505. NADP(+) is bound at residue Ile477. Residue Ile477 participates in NADPH binding. NADP(+) is bound by residues Lys508 and Thr556. Thr556 contacts NAD(+). NADPH is bound by residues Thr556, Ser557, Ser578, and Lys580. Positions 578 and 580 each coordinate NADP(+). Na(+)-binding residues include Glu607, Val610, Ala612, and Leu614. 2 residues coordinate NADP(+): Gly665 and Glu668. Glu668 and Asp679 together coordinate L-homoserine. Residue Lys683 is the Proton donor of the active site. Gly799 contributes to the NAD(+) binding site. An NADP(+)-binding site is contributed by Gly799. Gly799 is a binding site for NADPH.

This sequence in the N-terminal section; belongs to the aspartokinase family. The protein in the C-terminal section; belongs to the homoserine dehydrogenase family. As to quaternary structure, homotetramer. It depends on a metal cation as a cofactor.

The catalysed reaction is L-homoserine + NADP(+) = L-aspartate 4-semialdehyde + NADPH + H(+). It carries out the reaction L-homoserine + NAD(+) = L-aspartate 4-semialdehyde + NADH + H(+). The enzyme catalyses L-aspartate + ATP = 4-phospho-L-aspartate + ADP. It functions in the pathway amino-acid biosynthesis; L-lysine biosynthesis via DAP pathway; (S)-tetrahydrodipicolinate from L-aspartate: step 1/4. The protein operates within amino-acid biosynthesis; L-methionine biosynthesis via de novo pathway; L-homoserine from L-aspartate: step 1/3. It participates in amino-acid biosynthesis; L-methionine biosynthesis via de novo pathway; L-homoserine from L-aspartate: step 3/3. Its pathway is amino-acid biosynthesis; L-threonine biosynthesis; L-threonine from L-aspartate: step 1/5. It functions in the pathway amino-acid biosynthesis; L-threonine biosynthesis; L-threonine from L-aspartate: step 3/5. Functionally, bifunctional aspartate kinase and homoserine dehydrogenase that catalyzes the first and the third steps toward the synthesis of lysine, methionine and threonine from aspartate. The sequence is that of Bifunctional aspartokinase/homoserine dehydrogenase (thrA) from Buchnera aphidicola subsp. Acyrthosiphon pisum (strain APS) (Acyrthosiphon pisum symbiotic bacterium).